Reading from the N-terminus, the 115-residue chain is uncharacterized protein (115 aa).

A helical membrane pass occupies residues 36-56 (SFFSLGLIACFCIFLIIVLSE).

The protein localises to the membrane. This is an uncharacterized protein from Saccharomyces cerevisiae (strain ATCC 204508 / S288c) (Baker's yeast).